Consider the following 337-residue polypeptide: Hsp90 co-chaperone Cdc37-like 1 (337 aa).

Pro residues predominate over residues 1–11; the sequence is MEQPWPPPGPW. The interval 1 to 43 is disordered; the sequence is MEQPWPPPGPWSLPRAEGEAEEESDLDLSPGSPRCPQLPGGGT. A self-association region spans residues 2 to 171; sequence EQPWPPPGPW…HEQKIRHFGM (170 aa). S32 and S88 each carry phosphoserine. The stretch at 84-122 forms a coiled coil; it reads HNSESLDQEHAKAQTAISELRQREEEWRQKEEALVQRER. The tract at residues 147–277 is self-association and interaction with Hsp90; sequence KETEDEDKSK…SRVRLYSQSP (131 aa). The segment at 267-337 is interaction with Hsp70; the sequence is KSRVRLYSQS…DDEPKMMDTV (71 aa). The tract at residues 278–337 is required for interaction with STIP1; that stretch reads NFQPVTVQNHVPHSGVGSIGLLESLPQNPDYLQYSINTALCSLNSVVHKEDDEPKMMDTV.

It belongs to the CDC37 family. Self-associates. Forms complexes with Hsp70 and Hsp90. Interacts with CDC37, FKBP4, PPID and STIP1.

It localises to the cytoplasm. Functionally, co-chaperone that binds to numerous proteins and promotes their interaction with Hsp70 and Hsp90. In Bos taurus (Bovine), this protein is Hsp90 co-chaperone Cdc37-like 1 (CDC37L1).